A 173-amino-acid chain; its full sequence is Zinc finger A20 and AN1 domain-containing stress-associated protein 2 (173 aa).

Residues 12–46 (PEGPKLCTNNCGFFGSAATMNMCSKCHKDMLFQQE) form an A20-type zinc finger. Zn(2+) contacts are provided by C18, C22, C34, C37, C114, C117, C128, C130, C135, H138, H144, and C146. The segment at 108–154 (PKGPSRCTTCNKRVGLTGFKCRCGSLFCGTHRYADVHDCSFNYHAAA) adopts an AN1-type zinc-finger fold.

May be involved in environmental stress response. This Arabidopsis thaliana (Mouse-ear cress) protein is Zinc finger A20 and AN1 domain-containing stress-associated protein 2 (SAP2).